The chain runs to 165 residues: Large ribosomal subunit protein uL10 (165 aa).

This sequence belongs to the universal ribosomal protein uL10 family. Part of the ribosomal stalk of the 50S ribosomal subunit. The N-terminus interacts with L11 and the large rRNA to form the base of the stalk. The C-terminus forms an elongated spine to which L12 dimers bind in a sequential fashion forming a multimeric L10(L12)X complex.

In terms of biological role, forms part of the ribosomal stalk, playing a central role in the interaction of the ribosome with GTP-bound translation factors. This is Large ribosomal subunit protein uL10 (rplJ) from Halalkalibacterium halodurans (strain ATCC BAA-125 / DSM 18197 / FERM 7344 / JCM 9153 / C-125) (Bacillus halodurans).